Here is a 441-residue protein sequence, read N- to C-terminus: ATP-dependent protease ATPase subunit HslU (441 aa).

ATP is bound by residues I18, 60 to 65, D254, E319, and R391; that span reads GVGKTE.

Belongs to the ClpX chaperone family. HslU subfamily. A double ring-shaped homohexamer of HslV is capped on each side by a ring-shaped HslU homohexamer. The assembly of the HslU/HslV complex is dependent on binding of ATP.

The protein localises to the cytoplasm. ATPase subunit of a proteasome-like degradation complex; this subunit has chaperone activity. The binding of ATP and its subsequent hydrolysis by HslU are essential for unfolding of protein substrates subsequently hydrolyzed by HslV. HslU recognizes the N-terminal part of its protein substrates and unfolds these before they are guided to HslV for hydrolysis. The sequence is that of ATP-dependent protease ATPase subunit HslU from Shewanella halifaxensis (strain HAW-EB4).